The sequence spans 563 residues: MKKFLVLLIALIMIATLLVVPGVQTSAEGSYADLAEPDDDWLHVEGTNIVDKYGNKVWITGANWFGFNCRERMLLDSYHSDIIADIELVADKGINVVRMPIATDLLYAWSQGIYPPSTDTSYNNPALAGLNSYELFNFMLENFKRVGIKVILDVHSPETDNQGHNYPLWYNTTITEEIFKKAWVWVAERYKNDDTIIGFDLKNEPHTNTGTMKIKAQSAIWDDSNHPNNWKRVAEETALAILEVHPNVLIFVEGVEMYPKDGIWDDETFDTSPWTGNNDYYGNWWGGNLRGVKDYPINLGKYQSQLVYSPHDYGPIVYEQDWFKGDFITANDEQAKRILYEQCWRDNWAYIMEEGISPLLLGEWGGMTEGGHPLLDLNLKYLRCMRDFILENKYKLHHTFWCINIDSADTGGLFTRDEGTPFPGGRDLKWNDNKYDNYLYPVLWKTEDGKFIGLDHKIPLGRNGISISQLSNYTPSVTPSPSATPSPTTITAPPTDTVTYGDVNGDGRVNSSDVALLKRYLLGLVENINKEAADVNVSGTVNSTDLAIMKRYVLRSISELPYK.

The or 31 signal peptide spans 1 to 27 (MKKFLVLLIALIMIATLLVVPGVQTSA). The Proton donor role is filled by E204. E363 (nucleophile) is an active-site residue. Residues 476–495 (SVTPSPSATPSPTTITAPPT) are disordered. The Dockerin domain occupies 496–562 (DTVTYGDVNG…VLRSISELPY (67 aa)).

The protein belongs to the glycosyl hydrolase 5 (cellulase A) family.

It catalyses the reaction Endohydrolysis of (1-&gt;4)-beta-D-glucosidic linkages in cellulose, lichenin and cereal beta-D-glucans.. Its function is as follows. This enzyme catalyzes the endohydrolysis of 1,4-beta-glucosidic linkages in cellulose, lichenin and cereal beta-D-glucans. The chain is Endoglucanase B (celB) from Acetivibrio thermocellus (strain ATCC 27405 / DSM 1237 / JCM 9322 / NBRC 103400 / NCIMB 10682 / NRRL B-4536 / VPI 7372) (Clostridium thermocellum).